A 284-amino-acid polypeptide reads, in one-letter code: Bifunctional protein FolD (284 aa).

NADP(+) is bound by residues 166–168 (GAS) and Ile-232.

The protein belongs to the tetrahydrofolate dehydrogenase/cyclohydrolase family. Homodimer.

The enzyme catalyses (6R)-5,10-methylene-5,6,7,8-tetrahydrofolate + NADP(+) = (6R)-5,10-methenyltetrahydrofolate + NADPH. The catalysed reaction is (6R)-5,10-methenyltetrahydrofolate + H2O = (6R)-10-formyltetrahydrofolate + H(+). The protein operates within one-carbon metabolism; tetrahydrofolate interconversion. Its function is as follows. Catalyzes the oxidation of 5,10-methylenetetrahydrofolate to 5,10-methenyltetrahydrofolate and then the hydrolysis of 5,10-methenyltetrahydrofolate to 10-formyltetrahydrofolate. This is Bifunctional protein FolD from Pseudomonas fluorescens (strain Pf0-1).